A 322-amino-acid polypeptide reads, in one-letter code: MFEIHPVKKVSVVIPVYNEQESLPELIRRTTKACESLGKEYEILLIDDGSSDNSAHMLVEASQAEGSHIVSILLNRNYGQHSAIMAGFSHVTGDLIITLDADLQNPPEEIPRLVAKADEGYDVVGTVRQNRQDSWFRKTASKMINRLIQRTTGKAMGDYGCMLRAYRRHIVDAMLHCHERSTFIPILANIFARRAIEIPVHHAEREFGESKYSFMRLINLMYDLVTCLTTTPLRMLSLLGSIIAIGGFSIAVLLVILRLTFGPQWAAEGVFMLFAVLFTFIGAQFIGMGLLGEYIGRIYTDVRARPRYFVQQVIRPSSKENE.

Residues 1–235 are Cytoplasmic-facing; sequence MFEIHPVKKV…TCLTTTPLRM (235 aa). Residues 236 to 256 traverse the membrane as a helical segment; that stretch reads LSLLGSIIAIGGFSIAVLLVI. The Periplasmic segment spans residues 257 to 269; that stretch reads LRLTFGPQWAAEG. Residues 270–290 form a helical membrane-spanning segment; it reads VFMLFAVLFTFIGAQFIGMGL. Residues 291 to 322 are Cytoplasmic-facing; that stretch reads LGEYIGRIYTDVRARPRYFVQQVIRPSSKENE.

Belongs to the glycosyltransferase 2 family.

The protein resides in the cell inner membrane. It catalyses the reaction UDP-4-deoxy-4-formamido-beta-L-arabinose + di-trans,octa-cis-undecaprenyl phosphate = 4-deoxy-4-formamido-alpha-L-arabinopyranosyl di-trans,octa-cis-undecaprenyl phosphate + UDP. Its pathway is glycolipid biosynthesis; 4-amino-4-deoxy-alpha-L-arabinose undecaprenyl phosphate biosynthesis; 4-amino-4-deoxy-alpha-L-arabinose undecaprenyl phosphate from UDP-4-deoxy-4-formamido-beta-L-arabinose and undecaprenyl phosphate: step 1/2. The protein operates within bacterial outer membrane biogenesis; lipopolysaccharide biosynthesis. Functionally, catalyzes the transfer of 4-deoxy-4-formamido-L-arabinose from UDP to undecaprenyl phosphate. The modified arabinose is attached to lipid A and is required for resistance to polymyxin and cationic antimicrobial peptides. In Escherichia coli (strain SMS-3-5 / SECEC), this protein is Undecaprenyl-phosphate 4-deoxy-4-formamido-L-arabinose transferase.